A 253-amino-acid chain; its full sequence is Porin thermoregulatory protein EnvY (253 aa).

Positions 149–246 constitute an HTH araC/xylS-type domain; sequence DSVCRIIQSD…GLTPLNYLAK (98 aa). 2 consecutive DNA-binding regions (H-T-H motif) follow at residues 166–187 and 213–236; these read RIVA…KNEN and ITQV…KAFY.

Its function is as follows. Influences the temperature-dependent expression of several E.coli envelope proteins, most notably the porins OmpF and OmpC and the lambda receptor, LamB. The chain is Porin thermoregulatory protein EnvY (envY) from Escherichia coli (strain K12).